The following is a 415-amino-acid chain: 3-isopropylmalate dehydratase large subunit (415 aa).

[4Fe-4S] cluster contacts are provided by C295, C353, and C356.

This sequence belongs to the aconitase/IPM isomerase family. LeuC type 2 subfamily. Heterodimer of LeuC and LeuD. The cofactor is [4Fe-4S] cluster.

The catalysed reaction is (2R,3S)-3-isopropylmalate = (2S)-2-isopropylmalate. Its pathway is amino-acid biosynthesis; L-leucine biosynthesis; L-leucine from 3-methyl-2-oxobutanoate: step 2/4. Catalyzes the isomerization between 2-isopropylmalate and 3-isopropylmalate, via the formation of 2-isopropylmaleate. This Pyrobaculum arsenaticum (strain DSM 13514 / JCM 11321 / PZ6) protein is 3-isopropylmalate dehydratase large subunit.